The following is a 1673-amino-acid chain: AF4/FMR2 family member lilli (1673 aa).

9 disordered regions span residues 1–24 (MAQQ…NNNN), 54–80 (YSQN…QQGI), 125–302 (SRSA…PPEK), 407–534 (QLPP…GAQN), 575–604 (VGTG…SNKW), 722–1086 (RLSD…INTL), 1114–1133 (QGKL…PAAP), 1141–1160 (RMTP…PART), and 1187–1315 (KLTP…MGKE). Positions 71-80 (REKIERQQGI) are enriched in basic and acidic residues. 2 stretches are compositionally biased toward low complexity: residues 146–180 (SLGH…QQQQ) and 223–244 (PRTS…SGGV). T420 is modified (phosphothreonine). Over residues 428-441 (LKTEKNHSLEKQDS) the composition is skewed to basic and acidic residues. Acidic residues predominate over residues 443–454 (LENDLELSESED). 2 positions are modified to phosphoserine: S450 and S452. A compositionally biased stretch (low complexity) spans 465–486 (GNSSNSSESDSSESGSESSSKN). Basic residues predominate over residues 491–500 (HPNHQQHHHQ). The segment covering 501-525 (LQQQQQQQQATMQQQQVLQQQHRSQ) has biased composition (low complexity). The segment covering 577–586 (TGSGSGGTLS) has biased composition (gly residues). A compositionally biased stretch (polar residues) spans 594-604 (KTPSPTESNKW). Residues 724-757 (SDSGTSASGSSSSSSSSSDSAMGGEVVPMPGPGE) are compositionally biased toward low complexity. A compositionally biased stretch (polar residues) spans 775–788 (QPTQSQKAPPSNSV). Positions 802 to 812 (QRQKKPRKKKA) are enriched in basic residues. A phosphoserine mark is found at S821 and S822. Residues 851–863 (KKGRGRPRKQQQS) constitute a DNA-binding region (a.T hook). A compositionally biased stretch (low complexity) spans 860 to 898 (QQQSGGSGNLSSASAGSSSQTKGPTLTAAKKPLAKTPLA). Residues S871 and S873 each carry the phosphoserine modification. The span at 909–919 (SQSSSNGNTPT) shows a compositional bias: polar residues. Composition is skewed to low complexity over residues 949–965 (SSSA…SSSS) and 993–1004 (GSGSSSPSSSGS). Polar residues predominate over residues 1011 to 1022 (TRSQVGSGQALA). The span at 1034 to 1060 (SQHSQHLSSSDCSSSSGGCTAVCSSSS) shows a compositional bias: low complexity. The segment covering 1065–1082 (EGRREKERERKPKSDKNK) has biased composition (basic and acidic residues). The span at 1190–1205 (PAQQNGHLTPKDQATN) shows a compositional bias: polar residues. Basic and acidic residues-rich tracts occupy residues 1226–1243 (EHPV…EAKF) and 1252–1282 (FQLK…EQPP). Phosphoserine is present on S1362. T1364 is modified (phosphothreonine). Low complexity predominate over residues 1564–1583 (NTPSSISPSNSVGSQGSGSN). The interval 1564–1588 (NTPSSISPSNSVGSQGSGSNTPPGR) is disordered.

The protein belongs to the AF4 family. In terms of assembly, component of the super elongation complex (SEC), at least composed of Ell, Cdk9, cyclin-T (CycT), lilli and ear.

It localises to the nucleus. Its function is as follows. Has a role in transcriptional regulation. Acts in parallel with the Ras/MAPK and the PI3K/PKB pathways in the control of cell identity and cellular growth. Essential for regulation of the cytoskeleton and cell growth but not for cell proliferation or growth rate. Required specifically for the microtubule-based basal transport of lipid droplets. Plays a partially redundant function downstream of Raf in cell fate specification in the developing eye. Pair-rule protein that regulates embryonic cellularization, gastrulation and segmentation. The polypeptide is AF4/FMR2 family member lilli (Drosophila melanogaster (Fruit fly)).